Consider the following 256-residue polypeptide: Thiazole synthase (256 aa).

Catalysis depends on lysine 95, which acts as the Schiff-base intermediate with DXP. 1-deoxy-D-xylulose 5-phosphate contacts are provided by residues glycine 156, 182–183 (AG), and 204–205 (NT).

This sequence belongs to the ThiG family. In terms of assembly, homotetramer. Forms heterodimers with either ThiH or ThiS.

Its subcellular location is the cytoplasm. The enzyme catalyses [ThiS sulfur-carrier protein]-C-terminal-Gly-aminoethanethioate + 2-iminoacetate + 1-deoxy-D-xylulose 5-phosphate = [ThiS sulfur-carrier protein]-C-terminal Gly-Gly + 2-[(2R,5Z)-2-carboxy-4-methylthiazol-5(2H)-ylidene]ethyl phosphate + 2 H2O + H(+). Its pathway is cofactor biosynthesis; thiamine diphosphate biosynthesis. Its function is as follows. Catalyzes the rearrangement of 1-deoxy-D-xylulose 5-phosphate (DXP) to produce the thiazole phosphate moiety of thiamine. Sulfur is provided by the thiocarboxylate moiety of the carrier protein ThiS. In vitro, sulfur can be provided by H(2)S. The polypeptide is Thiazole synthase (Salmonella paratyphi A (strain ATCC 9150 / SARB42)).